Reading from the N-terminus, the 778-residue chain is Kin of IRRE-like protein 3 (778 aa).

The signal sequence occupies residues methionine 1 to glycine 21. Residues leucine 22–alanine 535 are Extracellular-facing. 5 consecutive Ig-like C2-type domains span residues tyrosine 48 to threonine 142, proline 147 to threonine 243, proline 249 to aspartate 330, proline 335 to threonine 415, and proline 419 to lysine 515. Cysteine 69 and cysteine 127 are joined by a disulfide. A glycan (N-linked (GlcNAc...) asparagine) is linked at asparagine 167. Residues cysteine 170 and cysteine 227 are joined by a disulfide bond. N-linked (GlcNAc...) asparagine glycosylation occurs at asparagine 253. Cysteine 271 and cysteine 314 are joined by a disulfide. Asparagine 324 carries an N-linked (GlcNAc...) asparagine glycan. 2 cysteine pairs are disulfide-bonded: cysteine 356–cysteine 398 and cysteine 440–cysteine 499. N-linked (GlcNAc...) asparagine glycosylation occurs at asparagine 498. Residues valine 536–valine 556 form a helical membrane-spanning segment. Residues alanine 557–valine 778 lie on the Cytoplasmic side of the membrane. The segment covering cysteine 727–lysine 736 has biased composition (polar residues). The interval cysteine 727–valine 778 is disordered. Positions lysine 748–glutamine 762 are enriched in low complexity.

The protein belongs to the immunoglobulin superfamily. Homodimer; mediates homophilic interactions to promote cell adhesion. Interacts with NPHS1; forms heterodimers with NPHS1. Interacts with NPHS2/podocin (via the C-terminus). Interacts with CASK. Interacts (via extracellular region) with MAP1B. Interacts (via extracellular region) with MYO16. Interacts (via intracellular region) with ATP1B1. Interacts (via intracellular region) with SHMT2. Interacts (via intracellular region) with UFC1. Undergoes proteolysis by a metalloprotease and gives rise to a soluble form. As to expression, expressed in fetal and adult brain. Also expressed in kidney, specifically in podocytes of kidney glomeruli. Also expressed in skeletal muscle.

Its subcellular location is the cell membrane. The protein localises to the secreted. Functionally, synaptic adhesion molecule required for the formation of target-specific synapses. Required for formation of target-specific synapses at hippocampal mossy fiber synapses. Required for formation of mossy fiber filopodia, the synaptic structures connecting dentate granule and GABA neurons. Probably acts as a homophilic adhesion molecule that promotes trans-cellular interactions and stabilize mossy fiber filipodia contact and subsequent synapse formation. Required for the coalescence of vomeronasal sensory neuron axons. May be involved in the hematopoietic supportive capacity of stroma cells; the secreted extracellular domain is directly responsible for supporting hematopoietic stem cells. This Homo sapiens (Human) protein is Kin of IRRE-like protein 3.